Consider the following 257-residue polypeptide: Dihydroorotate dehydrogenase B (NAD(+)), electron transfer subunit (257 aa).

Residues 2–102 (MKQEQMTVVR…LGPLGNGFPL (101 aa)) form the FAD-binding FR-type domain. Residues 53–56 (RPLS), 70–72 (IYR), and 77–78 (GT) contribute to the FAD site. The [2Fe-2S] cluster site is built by Cys-221, Cys-226, Cys-229, and Cys-244.

Belongs to the PyrK family. In terms of assembly, heterotetramer of 2 PyrK and 2 PyrD type B subunits. It depends on [2Fe-2S] cluster as a cofactor. FAD serves as cofactor.

Its pathway is pyrimidine metabolism; UMP biosynthesis via de novo pathway; orotate from (S)-dihydroorotate (NAD(+) route): step 1/1. Functionally, responsible for channeling the electrons from the oxidation of dihydroorotate from the FMN redox center in the PyrD type B subunit to the ultimate electron acceptor NAD(+). The sequence is that of Dihydroorotate dehydrogenase B (NAD(+)), electron transfer subunit from Geobacillus sp. (strain WCH70).